We begin with the raw amino-acid sequence, 173 residues long: MEVRYKRKVDLCFRPPRTVRAELSRPYGILFSNNAKLLSYLGQFERIITVGDVVTSLVTRSGIRPFLSVVDGKTRRNVSISGERSSEVITNEAGILRFSAMSKIKEIMYGREPRSLFVNGEDDMMVIPIILYGKNGDLVVYGQPNAGAVCLENWEGSRWRVMDIFSKFTAELC.

D52, V53, V54, D71, K73, and D122 together coordinate GTP.

Belongs to the GTP-dependent DPCK family.

The catalysed reaction is 3'-dephospho-CoA + GTP = GDP + CoA + H(+). The protein operates within cofactor biosynthesis; coenzyme A biosynthesis. In terms of biological role, catalyzes the GTP-dependent phosphorylation of the 3'-hydroxyl group of dephosphocoenzyme A to form coenzyme A (CoA). The polypeptide is GTP-dependent dephospho-CoA kinase (Metallosphaera sedula (strain ATCC 51363 / DSM 5348 / JCM 9185 / NBRC 15509 / TH2)).